An 825-amino-acid polypeptide reads, in one-letter code: Actin filament-associated protein 1-like 2 (825 aa).

Phosphotyrosine is present on Tyr56. The disordered stretch occupies residues 62–163; it reads VNGEQNSASP…SKGKAAPYQW (102 aa). Over residues 80 to 94 the composition is skewed to polar residues; the sequence is PLTNGEPSQHSSAPQ. A Phosphothreonine modification is found at Thr113. 2 PH domains span residues 175–271 and 353–447; these read DARI…EVSG and SLET…SESG. Ser408 is subject to Phosphoserine. The residue at position 413 (Tyr413) is a Phosphotyrosine. Position 484 is a phosphoserine (Ser484). The disordered stretch occupies residues 571–614; it reads TLTVDPKPGTTPEEPHTESPGDPEVQQRQPEVQESSEPIEPTPR. Over residues 593–608 the composition is skewed to low complexity; that stretch reads PEVQQRQPEVQESSEP. Residues 657-754 are a coiled coil; sequence AEIKLGKNRT…VKDNLKKAEA (98 aa). The tract at residues 757–801 is disordered; it reads VTLGTTVDTTHLDNMSPRPQPKAATPNPPPDSTPVNSASVLKNRP. Residues 759–769 are compositionally biased toward polar residues; it reads LGTTVDTTHLD.

As to quaternary structure, interacts with SRC. Interacts with LCK when tyrosine phosphorylated. Post-translationally, tyrosine phosphorylated (by SRC).

The protein localises to the cytoplasm. Functionally, may play a role in a signaling cascade by enhancing the kinase activity of SRC. Contributes to SRC-regulated transcription activation. This is Actin filament-associated protein 1-like 2 (Afap1l2) from Mus musculus (Mouse).